Consider the following 294-residue polypeptide: 1,4-dihydroxy-2-naphthoate octaprenyltransferase (294 aa).

6 helical membrane-spanning segments follow: residues S35–V55, A103–I123, G140–Y160, V166–V186, L220–V240, and G272–V292.

The protein belongs to the MenA family. Type 1 subfamily.

It localises to the cell membrane. The enzyme catalyses an all-trans-polyprenyl diphosphate + 1,4-dihydroxy-2-naphthoate + H(+) = a 2-demethylmenaquinol + CO2 + diphosphate. The protein operates within quinol/quinone metabolism; menaquinone biosynthesis; menaquinol from 1,4-dihydroxy-2-naphthoate: step 1/2. Conversion of 1,4-dihydroxy-2-naphthoate (DHNA) to demethylmenaquinone (DMK). This is 1,4-dihydroxy-2-naphthoate octaprenyltransferase from Mycobacterium leprae (strain TN).